The following is a 208-amino-acid chain: Glycerol-3-phosphate acyltransferase 1 (208 aa).

The next 5 membrane-spanning stretches (helical) occupy residues 52–72, 77–97, 112–132, 140–160, and 161–181; these read VVLM…YLLI, WVIL…WLDF, FLLP…LVFI, IALA…YGSH, and SEFA…KFVL.

Belongs to the PlsY family. As to quaternary structure, probably interacts with PlsX.

Its subcellular location is the cell membrane. The enzyme catalyses an acyl phosphate + sn-glycerol 3-phosphate = a 1-acyl-sn-glycero-3-phosphate + phosphate. Its pathway is lipid metabolism; phospholipid metabolism. Catalyzes the transfer of an acyl group from acyl-phosphate (acyl-PO(4)) to glycerol-3-phosphate (G3P) to form lysophosphatidic acid (LPA). This enzyme utilizes acyl-phosphate as fatty acyl donor, but not acyl-CoA or acyl-ACP. The protein is Glycerol-3-phosphate acyltransferase 1 of Dehalococcoides mccartyi (strain ATCC BAA-2266 / KCTC 15142 / 195) (Dehalococcoides ethenogenes (strain 195)).